A 548-amino-acid polypeptide reads, in one-letter code: uncharacterized protein (548 aa).

Short-chain dehydrogenase/reductase regions lie at residues 1–250 and 271–548; these read MDDR…WMSV and PVED…LLSP. Position 12 to 37 (12 to 37) interacts with NADP(+); sequence IVVTGAAGGIGRALVDIFAANGDVVV. Ser141 is a binding site for substrate. Tyr154 functions as the Proton acceptor in the catalytic mechanism. 280-304 lines the NADP(+) pocket; the sequence is VIVMGGATGVGAAIARRFAENGDTV. The Proton acceptor role is filled by Tyr420.

Belongs to the short-chain dehydrogenases/reductases (SDR) family.

This is an uncharacterized protein from Sinorhizobium fredii (strain NBRC 101917 / NGR234).